A 375-amino-acid chain; its full sequence is Chaperone protein DnaJ (375 aa).

The 66-residue stretch at 5–70 (DYYEILGVSK…QKRAAYDQYG (66 aa)) folds into the J domain. The CR-type zinc-finger motif lies at 130–208 (GVTKEIRIPT…CHGHGRVEKS (79 aa)). The Zn(2+) site is built by cysteine 143, cysteine 146, cysteine 160, cysteine 163, cysteine 182, cysteine 185, cysteine 196, and cysteine 199. 4 CXXCXGXG motif repeats span residues 143–150 (CDVCHGSG), 160–167 (CPTCHGSG), 182–189 (CPHCQGRG), and 196–203 (CHKCHGHG).

This sequence belongs to the DnaJ family. In terms of assembly, homodimer. Zn(2+) serves as cofactor.

The protein localises to the cytoplasm. Participates actively in the response to hyperosmotic and heat shock by preventing the aggregation of stress-denatured proteins and by disaggregating proteins, also in an autonomous, DnaK-independent fashion. Unfolded proteins bind initially to DnaJ; upon interaction with the DnaJ-bound protein, DnaK hydrolyzes its bound ATP, resulting in the formation of a stable complex. GrpE releases ADP from DnaK; ATP binding to DnaK triggers the release of the substrate protein, thus completing the reaction cycle. Several rounds of ATP-dependent interactions between DnaJ, DnaK and GrpE are required for fully efficient folding. Also involved, together with DnaK and GrpE, in the DNA replication of plasmids through activation of initiation proteins. The protein is Chaperone protein DnaJ of Salmonella paratyphi A (strain ATCC 9150 / SARB42).